The following is a 128-amino-acid chain: Ribonuclease P protein component (128 aa).

The protein belongs to the RnpA family. As to quaternary structure, consists of a catalytic RNA component (M1 or rnpB) and a protein subunit.

It carries out the reaction Endonucleolytic cleavage of RNA, removing 5'-extranucleotides from tRNA precursor.. In terms of biological role, RNaseP catalyzes the removal of the 5'-leader sequence from pre-tRNA to produce the mature 5'-terminus. It can also cleave other RNA substrates such as 4.5S RNA. The protein component plays an auxiliary but essential role in vivo by binding to the 5'-leader sequence and broadening the substrate specificity of the ribozyme. The protein is Ribonuclease P protein component of Chromohalobacter salexigens (strain ATCC BAA-138 / DSM 3043 / CIP 106854 / NCIMB 13768 / 1H11).